A 323-amino-acid polypeptide reads, in one-letter code: Forkhead transcription factor fkh-6 (323 aa).

Positions 21–122 (KPPYSYVALI…DNGNFKRRRV (102 aa)) form a DNA-binding region, fork-head.

The protein localises to the nucleus. Its function is as follows. Probable transcription factor. Binds to the DNA sequence motif 5'-[TA]TGTT[TG]T[TG][ATG]TT-3'. Regulates sexual dimorphism in the gonad, promoting male gonadal cell fates in chromosomally (XO) male animals, yet plays a role in gonadogenesis in both sexes; probably acts downstream of terminal regulator of sex determination tra-1, to control early gonadogenesis. Positively modulates expression of homeobox protein egl-5, probably acting indirectly, during early gonadal development. In Caenorhabditis elegans, this protein is Forkhead transcription factor fkh-6.